Reading from the N-terminus, the 247-residue chain is DNA-directed RNA polymerase subunit Rpo3 (247 aa).

Belongs to the archaeal Rpo3/eukaryotic RPB3 RNA polymerase subunit family. In terms of assembly, part of the RNA polymerase complex.

The protein resides in the cytoplasm. It carries out the reaction RNA(n) + a ribonucleoside 5'-triphosphate = RNA(n+1) + diphosphate. DNA-dependent RNA polymerase (RNAP) catalyzes the transcription of DNA into RNA using the four ribonucleoside triphosphates as substrates. The polypeptide is DNA-directed RNA polymerase subunit Rpo3 (Natronomonas pharaonis (strain ATCC 35678 / DSM 2160 / CIP 103997 / JCM 8858 / NBRC 14720 / NCIMB 2260 / Gabara) (Halobacterium pharaonis)).